Here is a 446-residue protein sequence, read N- to C-terminus: Methylenetetrahydrofolate--tRNA-(uracil-5-)-methyltransferase TrmFO (446 aa).

8–13 contacts FAD; sequence GGGLAG.

It belongs to the MnmG family. TrmFO subfamily. FAD is required as a cofactor.

It localises to the cytoplasm. It carries out the reaction uridine(54) in tRNA + (6R)-5,10-methylene-5,6,7,8-tetrahydrofolate + NADH + H(+) = 5-methyluridine(54) in tRNA + (6S)-5,6,7,8-tetrahydrofolate + NAD(+). The enzyme catalyses uridine(54) in tRNA + (6R)-5,10-methylene-5,6,7,8-tetrahydrofolate + NADPH + H(+) = 5-methyluridine(54) in tRNA + (6S)-5,6,7,8-tetrahydrofolate + NADP(+). Functionally, catalyzes the folate-dependent formation of 5-methyl-uridine at position 54 (M-5-U54) in all tRNAs. The chain is Methylenetetrahydrofolate--tRNA-(uracil-5-)-methyltransferase TrmFO from Zymomonas mobilis subsp. mobilis (strain ATCC 31821 / ZM4 / CP4).